We begin with the raw amino-acid sequence, 603 residues long: Phosphoenolpyruvate carboxykinase [GTP] (603 aa).

Substrate contacts are provided by residues R87 and 209 to 211; that span reads YAG. Mn(2+)-binding residues include K218 and H237. S258 lines the substrate pocket. 259–264 lines the GTP pocket; it reads GSGKTS. S260 is a catalytic residue. D275 contributes to the Mn(2+) binding site. 365–367 contributes to the substrate binding site; the sequence is NAR. R367 and R398 together coordinate GTP.

Belongs to the phosphoenolpyruvate carboxykinase [GTP] family. The cofactor is Mn(2+).

It localises to the cytoplasm. It catalyses the reaction oxaloacetate + GTP = phosphoenolpyruvate + GDP + CO2. It participates in carbohydrate biosynthesis; gluconeogenesis. Functionally, catalyzes the conversion of oxaloacetate (OAA) to phosphoenolpyruvate (PEP), the rate-limiting step in the metabolic pathway that produces glucose from lactate and other precursors derived from the citric acid cycle. The chain is Phosphoenolpyruvate carboxykinase [GTP] from Saccharolobus solfataricus (strain ATCC 35092 / DSM 1617 / JCM 11322 / P2) (Sulfolobus solfataricus).